Reading from the N-terminus, the 588-residue chain is Probable metalloprotease ARX1 (588 aa).

Belongs to the peptidase M24 family. As to quaternary structure, component of the nucleoplasmic and cytoplasmic pre-60S ribosomal particles.

The protein resides in the cytoplasm. It localises to the nucleus. In terms of biological role, probable metalloprotease involved in proper assembly of pre-ribosomal particles during the biogenesis of the 60S ribosomal subunit. Accompanies the pre-60S particles to the cytoplasm. The protein is Probable metalloprotease ARX1 (ARX1) of Candida glabrata (strain ATCC 2001 / BCRC 20586 / JCM 3761 / NBRC 0622 / NRRL Y-65 / CBS 138) (Yeast).